Here is a 325-residue protein sequence, read N- to C-terminus: L-lactate dehydrogenase (325 aa).

Residues V21, D42, K47, Y73, and 87 to 88 contribute to the NAD(+) site; that span reads GA. Substrate contacts are provided by residues Q90, R96, and 128–131; that span reads NPVD. NAD(+)-binding positions include 126-128 and S151; that span reads ATN. 156–159 is a binding site for substrate; it reads DTAR. R161 and H176 together coordinate beta-D-fructose 1,6-bisphosphate. H183 acts as the Proton acceptor in catalysis. Y228 is modified (phosphotyrosine). Residue T237 coordinates substrate.

This sequence belongs to the LDH/MDH superfamily. LDH family. Homotetramer.

The protein resides in the cytoplasm. The enzyme catalyses (S)-lactate + NAD(+) = pyruvate + NADH + H(+). It functions in the pathway fermentation; pyruvate fermentation to lactate; (S)-lactate from pyruvate: step 1/1. With respect to regulation, allosterically activated by fructose 1,6-bisphosphate (FBP). In terms of biological role, catalyzes the conversion of lactate to pyruvate. This is L-lactate dehydrogenase from Shouchella clausii (strain KSM-K16) (Alkalihalobacillus clausii).